We begin with the raw amino-acid sequence, 231 residues long: tRNA (guanine-N(7)-)-methyltransferase (231 aa).

S-adenosyl-L-methionine contacts are provided by Asp57, Glu82, Asp109, and Asp132. The active site involves Asp132. Substrate is bound by residues Lys136, Asp168, and Thr205 to Glu208. The segment at Ala194–Lys214 is disordered.

This sequence belongs to the class I-like SAM-binding methyltransferase superfamily. TrmB family.

The catalysed reaction is guanosine(46) in tRNA + S-adenosyl-L-methionine = N(7)-methylguanosine(46) in tRNA + S-adenosyl-L-homocysteine. The protein operates within tRNA modification; N(7)-methylguanine-tRNA biosynthesis. Its function is as follows. Catalyzes the formation of N(7)-methylguanine at position 46 (m7G46) in tRNA. This chain is tRNA (guanine-N(7)-)-methyltransferase, found in Halorhodospira halophila (strain DSM 244 / SL1) (Ectothiorhodospira halophila (strain DSM 244 / SL1)).